A 329-amino-acid polypeptide reads, in one-letter code: Haptoglobin (329 aa).

N9 carries N-linked (GlcNAc...) asparagine glycosylation. The 58-residue stretch at 13–70 (VSLPKPPVIENGYVEHMIRYQCKPFYKLHTEGDGVYTLNSEKHWTNKAVGEKLPECEA) folds into the Sushi domain. Intrachain disulfides connect C34–C68 and C72–C189. R84 is a propeptide. In terms of domain architecture, Peptidase S1 spans 85-327 (IMGGSVDAKG…VLAWVQETIA (243 aa)). 2 N-linked (GlcNAc...) asparagine glycosylation sites follow: N107 and N214. 2 cysteine pairs are disulfide-bonded: C232-C263 and C274-C304. Positions 241-246 (VPEKKS) are interaction with CD163.

Belongs to the peptidase S1 family. As to quaternary structure, tetramer of two alpha and two beta chains; disulfide-linked. The hemoglobin/haptoglobin complex is composed of a haptoglobin dimer bound to two hemoglobin alpha-beta dimers. Interacts with CD163. Interacts with ERGIC3. As to expression, expressed by the liver and secreted in plasma.

It localises to the secreted. Its subcellular location is the extracellular space. Its function is as follows. As a result of hemolysis, hemoglobin is found to accumulate in the kidney and is secreted in the urine. Haptoglobin captures, and combines with free plasma hemoglobin to allow hepatic recycling of heme iron and to prevent kidney damage. Haptoglobin also acts as an antioxidant, has antibacterial activity and plays a role in modulating many aspects of the acute phase response. Hemoglobin/haptoglobin complexes are rapidly cleared by the macrophage CD163 scavenger receptor expressed on the surface of liver Kupfer cells through an endocytic lysosomal degradation pathway. The polypeptide is Haptoglobin (HP) (Canis lupus familiaris (Dog)).